The chain runs to 199 residues: 3-isopropylmalate dehydratase small subunit (199 aa).

It belongs to the LeuD family. LeuD type 1 subfamily. Heterodimer of LeuC and LeuD.

The catalysed reaction is (2R,3S)-3-isopropylmalate = (2S)-2-isopropylmalate. The protein operates within amino-acid biosynthesis; L-leucine biosynthesis; L-leucine from 3-methyl-2-oxobutanoate: step 2/4. Catalyzes the isomerization between 2-isopropylmalate and 3-isopropylmalate, via the formation of 2-isopropylmaleate. The sequence is that of 3-isopropylmalate dehydratase small subunit from Bacillus velezensis (strain DSM 23117 / BGSC 10A6 / LMG 26770 / FZB42) (Bacillus amyloliquefaciens subsp. plantarum).